A 451-amino-acid polypeptide reads, in one-letter code: 3-carboxy-cis,cis-muconate cycloisomerase (451 aa).

The protein belongs to the class-II fumarase/aspartase family. In terms of assembly, homotetramer.

The enzyme catalyses 2-(carboxymethyl)-5-oxo-2,5-dihydro-2-furoate = 3-carboxy-cis,cis-muconate + H(+). Its pathway is aromatic compound metabolism; beta-ketoadipate pathway; 5-oxo-4,5-dihydro-2-furylacetate from 3-carboxy-cis,cis-muconate: step 1/2. Catalyzes an anti cycloisomerization. The sequence is that of 3-carboxy-cis,cis-muconate cycloisomerase (pcaB) from Acinetobacter baylyi (strain ATCC 33305 / BD413 / ADP1).